Consider the following 373-residue polypeptide: GDP-mannose 4,6-dehydratase (373 aa).

Residues 9 to 14 (GVTGQD), 64 to 65 (DL), 86 to 90 (LGAMS), and Y101 contribute to the NADP(+) site. T133 is an active-site residue. Active-site nucleophile residues include E135 and Y157. Positions 161, 187, and 192 each coordinate NADP(+).

The protein belongs to the NAD(P)-dependent epimerase/dehydratase family. GDP-mannose 4,6-dehydratase subfamily. It depends on NADP(+) as a cofactor.

It catalyses the reaction GDP-alpha-D-mannose = GDP-4-dehydro-alpha-D-rhamnose + H2O. It participates in nucleotide-sugar biosynthesis; GDP-L-fucose biosynthesis via de novo pathway; GDP-L-fucose from GDP-alpha-D-mannose: step 1/2. In terms of biological role, catalyzes the conversion of GDP-D-mannose to GDP-4-dehydro-6-deoxy-D-mannose. The sequence is that of GDP-mannose 4,6-dehydratase from Escherichia coli O157:H7.